The following is a 177-amino-acid chain: Bifunctional protein PyrR (177 aa).

The PRPP-binding motif lies at 99 to 111 (VVLVDDVLFTGRT).

It belongs to the purine/pyrimidine phosphoribosyltransferase family. PyrR subfamily.

It catalyses the reaction UMP + diphosphate = 5-phospho-alpha-D-ribose 1-diphosphate + uracil. In terms of biological role, regulates the transcription of the pyrimidine nucleotide (pyr) operon in response to exogenous pyrimidines. Also displays a weak uracil phosphoribosyltransferase activity which is not physiologically significant. The sequence is that of Bifunctional protein PyrR from Geobacter sulfurreducens (strain ATCC 51573 / DSM 12127 / PCA).